A 510-amino-acid polypeptide reads, in one-letter code: ATP synthase subunit alpha (510 aa).

Gly-169–Thr-176 contacts ATP.

This sequence belongs to the ATPase alpha/beta chains family. As to quaternary structure, F-type ATPases have 2 components, CF(1) - the catalytic core - and CF(0) - the membrane proton channel. CF(1) has five subunits: alpha(3), beta(3), gamma(1), delta(1), epsilon(1). CF(0) has four main subunits: a(1), b(1), b'(1) and c(9-12).

It is found in the cell inner membrane. The enzyme catalyses ATP + H2O + 4 H(+)(in) = ADP + phosphate + 5 H(+)(out). Functionally, produces ATP from ADP in the presence of a proton gradient across the membrane. The alpha chain is a regulatory subunit. The protein is ATP synthase subunit alpha of Rhodopseudomonas palustris (strain ATCC BAA-98 / CGA009).